An 89-amino-acid polypeptide reads, in one-letter code: MLEHELTVTNKLGLHARATAKLVQTMSKFQSNTTLSTKGREVNAKSIMGVMLLAASQGTVIRVRIDGEDEHTAMQALSELFENRFNEDT.

Residues 1 to 88 enclose the HPr domain; the sequence is MLEHELTVTN…ELFENRFNED (88 aa). His-15 (pros-phosphohistidine intermediate) is an active-site residue. Ser-46 carries the phosphoserine; by HPrK/P modification.

The protein belongs to the HPr family.

The protein localises to the cytoplasm. With respect to regulation, phosphorylation on Ser-46 inhibits the phosphoryl transfer from enzyme I to HPr. In terms of biological role, general (non sugar-specific) component of the phosphoenolpyruvate-dependent sugar phosphotransferase system (sugar PTS). This major carbohydrate active-transport system catalyzes the phosphorylation of incoming sugar substrates concomitantly with their translocation across the cell membrane. The phosphoryl group from phosphoenolpyruvate (PEP) is transferred to the phosphoryl carrier protein HPr by enzyme I. Phospho-HPr then transfers it to the PTS EIIA domain. In Xylella fastidiosa (strain Temecula1 / ATCC 700964), this protein is Phosphocarrier protein HPr (ptsH).